A 224-amino-acid polypeptide reads, in one-letter code: Ion-translocating oxidoreductase complex subunit E (224 aa).

5 consecutive transmembrane segments (helical) span residues L51–F71, I81–A101, S105–G125, M140–I160, and H194–I214.

This sequence belongs to the NqrDE/RnfAE family. In terms of assembly, the complex is composed of six subunits: RnfA, RnfB, RnfC, RnfD, RnfE and RnfG.

The protein localises to the cell inner membrane. In terms of biological role, part of a membrane-bound complex that couples electron transfer with translocation of ions across the membrane. The chain is Ion-translocating oxidoreductase complex subunit E from Pasteurella multocida (strain Pm70).